A 408-amino-acid chain; its full sequence is Arginine biosynthesis bifunctional protein ArgJ (408 aa).

6 residues coordinate substrate: T156, K182, T193, E279, N403, and S408. T193 acts as the Nucleophile in catalysis.

It belongs to the ArgJ family. As to quaternary structure, heterotetramer of two alpha and two beta chains.

The protein localises to the cytoplasm. It catalyses the reaction N(2)-acetyl-L-ornithine + L-glutamate = N-acetyl-L-glutamate + L-ornithine. The enzyme catalyses L-glutamate + acetyl-CoA = N-acetyl-L-glutamate + CoA + H(+). It functions in the pathway amino-acid biosynthesis; L-arginine biosynthesis; L-ornithine and N-acetyl-L-glutamate from L-glutamate and N(2)-acetyl-L-ornithine (cyclic): step 1/1. It participates in amino-acid biosynthesis; L-arginine biosynthesis; N(2)-acetyl-L-ornithine from L-glutamate: step 1/4. Its function is as follows. Catalyzes two activities which are involved in the cyclic version of arginine biosynthesis: the synthesis of N-acetylglutamate from glutamate and acetyl-CoA as the acetyl donor, and of ornithine by transacetylation between N(2)-acetylornithine and glutamate. This is Arginine biosynthesis bifunctional protein ArgJ from Dechloromonas aromatica (strain RCB).